Consider the following 697-residue polypeptide: Testis-specific gene 10 protein (697 aa).

Residues 556–688 (QMTNERISMQ…SPDRGLDRSL (133 aa)) form an interaction with HIF1A region. Residues 656-684 (NAYNLGPMKPNTKCHSPERAHHRSPDRGL) are disordered. Residues 670 to 684 (HSPERAHHRSPDRGL) are compositionally biased toward basic and acidic residues. Residue Ser687 is modified to Phosphoserine.

Belongs to the CEP135/TSGA10 family. Interacts with HIF1A. In terms of processing, processed into N-terminal 27-kDa and C-terminal 55-kDa fragments. As to expression, predominantly expressed in testis, in spermatozoa (at protein level). Not detected in Leydig cells. The N-terminal 27-kDa fragment is also detected in liver, while the C-terminal 55-kDa fragment is also found retina, brain and kidney (at protein level).

It is found in the cytoplasm. The protein localises to the cytoskeleton. It localises to the microtubule organizing center. The protein resides in the centrosome. Its subcellular location is the centriole. Its function is as follows. Plays a role in spermatogenesis. When overexpressed, prevents nuclear localization of HIF1A. This is Testis-specific gene 10 protein (Tsga10) from Mus musculus (Mouse).